The chain runs to 271 residues: Proteasome inhibitor PI31 subunit (271 aa).

An N-acetylalanine modification is found at A2. An important for homodimerization and interaction with FBXO7 region spans residues 2 to 150; that stretch reads AGLEVLFASA…PIHEQWEKAR (149 aa). Phosphoserine is present on residues S153 and S189. R205 carries the omega-N-methylarginine modification. R219 carries the asymmetric dimethylarginine modification. The segment at 226 to 271 is disordered; that stretch reads SGLPNRLPPGAVPPGARFDPFGPIGTSPSGPNPDHLPPPGYDDMYL. Position 231 is an omega-N-methylarginine (R231). A Phosphoserine modification is found at S252. The span at 255 to 265 shows a compositional bias: pro residues; that stretch reads GPNPDHLPPPG.

This sequence belongs to the proteasome inhibitor PI31 family. As to quaternary structure, monomer and homodimer. Interacts with FBXO7.

The protein localises to the cytoplasm. The protein resides in the endoplasmic reticulum. Functionally, plays an important role in control of proteasome function. Inhibits the hydrolysis of protein and peptide substrates by the 20S proteasome. Also inhibits the activation of the proteasome by the proteasome regulatory proteins PA700 and PA28. The protein is Proteasome inhibitor PI31 subunit (Psmf1) of Mus musculus (Mouse).